Consider the following 69-residue polypeptide: MEAIDSAIDPLRDFAKSSVRLVQRCHKPDRKEFTKVAVRTAIGFVVMGFVGFFVKLVFIPINNIIVGSS.

At M1 the chain carries N-acetylmethionine. Topologically, residues 1–32 are cytoplasmic; sequence MEAIDSAIDPLRDFAKSSVRLVQRCHKPDRKE. The chain crosses the membrane as a helical span at residues 33 to 61; the sequence is FTKVAVRTAIGFVVMGFVGFFVKLVFIPI. Over 62–69 the chain is Extracellular; that stretch reads NNIIVGSS.

Belongs to the SecE/SEC61-gamma family. Heterotrimeric complex composed of SEC61-alpha, SEC61-beta and SEC61-gamma.

It is found in the endoplasmic reticulum membrane. Its function is as follows. Necessary for protein translocation in the endoplasmic reticulum. This Arabidopsis thaliana (Mouse-ear cress) protein is Protein transport protein Sec61 subunit gamma-3 (SEC61G3).